A 447-amino-acid polypeptide reads, in one-letter code: Cytochrome P450 BJ-4 homolog (447 aa).

Cys392 is a binding site for heme.

The protein belongs to the cytochrome P450 family. The cofactor is heme.

Functionally, cytochromes P450 are a group of heme-thiolate monooxygenases. They oxidize a variety of structurally unrelated compounds, including steroids, fatty acids, and xenobiotics. The polypeptide is Cytochrome P450 BJ-4 homolog (cyp117A2) (Sinorhizobium fredii (strain NBRC 101917 / NGR234)).